The primary structure comprises 433 residues: Inward rectifier potassium channel 18 (433 aa).

Topologically, residues 1–77 are cytoplasmic; it reads MTAASRANPY…LADMFTTCVD (77 aa). Residues 78-104 traverse the membrane as a helical segment; the sequence is IRWRYMLLIFSLAFLASWLLFGVIFWV. Over 105–129 the chain is Extracellular; that stretch reads IAVAHGDLEPAEGHGRTPCVMQVHG. The segment at residues 130–146 is an intramembrane region (helical; Pore-forming); sequence FMAAFLFSIETQTTIGY. The Selectivity filter signature appears at 143-148; that stretch reads TIGYGL. Residues 147–155 lie on the Extracellular side of the membrane; the sequence is GLRCVTEEC. Residues 156-183 traverse the membrane as a helical segment; sequence LVAVFMVVAQSIVGCIIDSFMIGAIMAK. The Cytoplasmic segment spans residues 184–433; sequence MARPKKRAQT…QRPYRRGSEI (250 aa). Positions 387–433 are disordered; sequence DEEDEADGDQDGRSRDGLSPQARHDFDRLQAGGGVLEQRPYRRGSEI. The segment covering 396–414 has biased composition (basic and acidic residues); sequence QDGRSRDGLSPQARHDFDR.

This sequence belongs to the inward rectifier-type potassium channel (TC 1.A.2.1) family. KCNJ12 subfamily. As to quaternary structure, can form heteromeric channels with Kir2.1/KCNJ2. Can form heteromeric channels with Kir2.2/KCNJ12. Probably phosphorylated by PKC; decreases single-channel open probability. In terms of tissue distribution, specifically expressed in skeletal muscle.

It localises to the cell membrane. The protein localises to the endoplasmic reticulum. The catalysed reaction is K(+)(in) = K(+)(out). Functionally, inward rectifier potassium channels are characterized by a greater tendency to allow potassium to flow into the cell rather than out of it. Their voltage dependence is regulated by the concentration of extracellular potassium; as external potassium is raised, the voltage range of the channel opening shifts to more positive voltages. The inward rectification is mainly due to the blockage of outward current by internal magnesium. This is Inward rectifier potassium channel 18 (KCNJ18) from Homo sapiens (Human).